The following is a 62-amino-acid chain: Temporin-CDYb (62 aa).

An N-terminal signal peptide occupies residues 1 to 22 (MFTLKKSLLLLFFLGTINLSLC). A propeptide spanning residues 23 to 45 (EEERDADEEERRDDPEERAVQVE) is cleaved from the precursor. Leucine 60 is modified (leucine amide).

Belongs to the frog skin active peptide (FSAP) family. Temporin subfamily. Expressed by the skin glands.

Its subcellular location is the secreted. Its function is as follows. Antimicrobial peptide. Has low activity against the Gram-positive bacterium S.aureus (MIC&gt;100 uM) and the Gram-negative bacterium E.coli (MIC&gt;100 uM). Has weak hemolytic activity against human erythrocytes. The sequence is that of Temporin-CDYb from Rana dybowskii (Dybovsky's frog).